Consider the following 72-residue polypeptide: UPF0352 protein SO_2176 (72 aa).

It belongs to the UPF0352 family.

This Shewanella oneidensis (strain ATCC 700550 / JCM 31522 / CIP 106686 / LMG 19005 / NCIMB 14063 / MR-1) protein is UPF0352 protein SO_2176.